Consider the following 211-residue polypeptide: Small ribosomal subunit protein uS3 (211 aa).

One can recognise a KH type-2 domain in the interval 38–106 (LRSFVKKTFH…DVELHIVEVK (69 aa)).

Belongs to the universal ribosomal protein uS3 family. As to quaternary structure, part of the 30S ribosomal subunit. Forms a tight complex with proteins S10 and S14.

Its function is as follows. Binds the lower part of the 30S subunit head. Binds mRNA in the 70S ribosome, positioning it for translation. The polypeptide is Small ribosomal subunit protein uS3 (Anaplasma marginale (strain Florida)).